The sequence spans 1006 residues: Probable sulfite reductase [NADPH] flavoprotein component (1006 aa).

The FAD-binding FR-type domain occupies Glu-622–Pro-852. Residues Tyr-658–Val-669 and Ile-788–Ser-798 contribute to the FAD site.

It depends on FAD as a cofactor. FMN is required as a cofactor.

It catalyses the reaction hydrogen sulfide + 3 NADP(+) + 3 H2O = sulfite + 3 NADPH + 4 H(+). It functions in the pathway sulfur metabolism; hydrogen sulfide biosynthesis; hydrogen sulfide from sulfite (NADPH route): step 1/1. This enzyme catalyzes the 6-electron reduction of sulfite to sulfide. This is one of several activities required for the biosynthesis of L-cysteine from sulfate. This Schizosaccharomyces pombe (strain 972 / ATCC 24843) (Fission yeast) protein is Probable sulfite reductase [NADPH] flavoprotein component.